The chain runs to 576 residues: Small ribosomal subunit protein mS80 (rPPR6) (576 aa).

The transit peptide at 1–76 directs the protein to the mitochondrion; that stretch reads MLRSFLCRSQ…SLPADEIPIS (76 aa). PPR repeat units follow at residues 230-264, 265-299, 300-336, 341-370, 371-405, 406-440, 441-475, 476-510, and 511-546; these read NLEILNELIALFGKLGKSKAAFDVFSKTEEFGFTP, NAKTYYLTLEALCKRSFMDWACSVCEKMLKSGVLS, EGEQMGNIITWFCKEGKAEEAYSVYELAKTKEKSLPP, TLITALCKNDGTITFAQEMLGDLSGEARRR, GIKPFSDVIHSLCRMRNVKDAKALLLDMISKGPAP, GNAVFNLVVHACSKTGDLDEAKEVLKLMESRGLKP, DVYTYTVIISGYAKGGMMDEAQEILAEAKKKHKKL, SPVTYHALIRGYCKIEEYDEALKLLNEMDRFGVQP, and NADEYNKLIQSFCLKALDWEKAEVLFEEMKQKGLHL.

This sequence belongs to the PPR family. P subfamily. Component of the mitochondrial ribosome small subunit.

It is found in the mitochondrion. The chain is Small ribosomal subunit protein mS80 (rPPR6) from Arabidopsis thaliana (Mouse-ear cress).